The chain runs to 62 residues: Ferredoxin-3 (62 aa).

2 consecutive 4Fe-4S ferredoxin-type domains span residues 2-28 and 29-62; these read SLKITEECTFCAACEPECPVNAISAGS and DIYVIDESACTECEGYADSPACVAVCPAECIVKA. [4Fe-4S] cluster-binding residues include C9, C12, C15, C19, C38, C41, C50, and C54.

It depends on [4Fe-4S] cluster as a cofactor.

Its function is as follows. Ferredoxins are iron-sulfur proteins that transfer electrons in a wide variety of metabolic reactions. This chain is Ferredoxin-3, found in Chlorobaculum tepidum (strain ATCC 49652 / DSM 12025 / NBRC 103806 / TLS) (Chlorobium tepidum).